Reading from the N-terminus, the 54-residue chain is Ovomucoid (54 aa).

Residues 4–54 (VDCSDYPKPSCTLEDKPLCGSDNQTYSNKCSFCNAVVDSNGTLTLSHFGKC) enclose the Kazal-like domain. 3 cysteine pairs are disulfide-bonded: Cys-6–Cys-36, Cys-14–Cys-33, and Cys-22–Cys-54. An N-linked (GlcNAc...) asparagine glycan is attached at Asn-43.

The protein localises to the secreted. The polypeptide is Ovomucoid (Megapodius freycinet (Dusky scrubfowl)).